Consider the following 441-residue polypeptide: Enolase (441 aa).

Gln-163 contributes to the (2R)-2-phosphoglycerate binding site. Glu-205 serves as the catalytic Proton donor. Mg(2+)-binding residues include Asp-242, Glu-288, and Asp-315. Residues Lys-340, Arg-369, Ser-370, and Lys-391 each coordinate (2R)-2-phosphoglycerate. Residue Lys-340 is the Proton acceptor of the active site.

Belongs to the enolase family. Mg(2+) is required as a cofactor.

Its subcellular location is the cytoplasm. The protein localises to the secreted. It is found in the cell surface. It catalyses the reaction (2R)-2-phosphoglycerate = phosphoenolpyruvate + H2O. It functions in the pathway carbohydrate degradation; glycolysis; pyruvate from D-glyceraldehyde 3-phosphate: step 4/5. Its function is as follows. Catalyzes the reversible conversion of 2-phosphoglycerate (2-PG) into phosphoenolpyruvate (PEP). It is essential for the degradation of carbohydrates via glycolysis. This is Enolase from Ligilactobacillus salivarius (strain UCC118) (Lactobacillus salivarius).